We begin with the raw amino-acid sequence, 242 residues long: Small ribosomal subunit protein uS2 (242 aa).

The protein belongs to the universal ribosomal protein uS2 family.

This chain is Small ribosomal subunit protein uS2, found in Photobacterium profundum (strain SS9).